The primary structure comprises 279 residues: DegV domain-containing protein lin1977 (279 aa).

The region spanning 4–278 (IKIITDSTAG…TGAFAFMYYT (275 aa)) is the DegV domain. The hexadecanoate site is built by Ser62 and Ser94.

May bind long-chain fatty acids, such as palmitate, and may play a role in lipid transport or fatty acid metabolism. The sequence is that of DegV domain-containing protein lin1977 from Listeria innocua serovar 6a (strain ATCC BAA-680 / CLIP 11262).